The following is an 839-amino-acid chain: Taste receptor type 1 member 2 (839 aa).

A signal peptide spans 1 to 19; that stretch reads MGPRATTICSLFFLLWVLA. Over 20–566 the chain is Extracellular; sequence EPAENSDFYL…AFLEWHEAPT (547 aa). Asn84, Asn248, Asn292, Asn312, Asn368, Asn428, Asn487, and Asn527 each carry an N-linked (GlcNAc...) asparagine glycan. The helical transmembrane segment at 567 to 587 threads the bilayer; sequence IAVALLAALGFLSTLAILVIF. At 588–602 the chain is on the cytoplasmic side; sequence WRHFQTPMVRSAGGP. A helical membrane pass occupies residues 603-623; it reads MCFLMLTLLLVAYMVVPVYVG. Topologically, residues 624-635 are extracellular; sequence PPKVSTCLCRQA. Residues 636 to 656 form a helical membrane-spanning segment; sequence LFPLCFTICISCIAVRSFQII. The Cytoplasmic portion of the chain corresponds to 657–681; that stretch reads CAFKMASRFPRAYSYWVRYQGPYVS. A helical transmembrane segment spans residues 682–702; sequence MAFITVLKMVIVVIGMLATGL. Topologically, residues 703-727 are extracellular; it reads NPTTRTDPDDPKIMIVSCNPNYRNS. Residues 728–748 form a helical membrane-spanning segment; it reads LLFNTSLDLLLSVVGFSFANM. Over 749 to 760 the chain is Cytoplasmic; it reads GKELPTNYNEAK. A helical transmembrane segment spans residues 761-781; it reads FITLSMTFYFTSSISLCTFMS. Residues 782–784 lie on the Extracellular side of the membrane; it reads AYS. A helical transmembrane segment spans residues 785 to 805; the sequence is GVLVTIVDLLVTVLNLLAISL. The Cytoplasmic portion of the chain corresponds to 806–839; it reads GYFGPKCYMILFYPERNTPAYFNSVIQGYTMTRD.

It belongs to the G-protein coupled receptor 3 family. TAS1R subfamily. As to quaternary structure, forms heterodimers with TAS1R3.

It localises to the cell membrane. Functionally, putative taste receptor. TAS1R2/TAS1R3 recognizes diverse natural and synthetic sweeteners. This is Taste receptor type 1 member 2 (TAS1R2) from Pongo pygmaeus (Bornean orangutan).